Here is a 279-residue protein sequence, read N- to C-terminus: Energy-coupling factor transporter ATP-binding protein EcfA1 (279 aa).

The ABC transporter domain occupies 6–240; that stretch reads VRLEHVFYKY…ADAMREIGLG (235 aa). 40–47 serves as a coordination point for ATP; the sequence is GHNGSGKS.

Belongs to the ABC transporter superfamily. Energy-coupling factor EcfA family. In terms of assembly, forms a stable energy-coupling factor (ECF) transporter complex composed of 2 membrane-embedded substrate-binding proteins (S component), 2 ATP-binding proteins (A component) and 2 transmembrane proteins (T component).

The protein localises to the cell membrane. ATP-binding (A) component of a common energy-coupling factor (ECF) ABC-transporter complex. Unlike classic ABC transporters this ECF transporter provides the energy necessary to transport a number of different substrates. This chain is Energy-coupling factor transporter ATP-binding protein EcfA1, found in Listeria monocytogenes serovar 1/2a (strain ATCC BAA-679 / EGD-e).